The sequence spans 1368 residues: DNA-directed RNA polymerase subunit beta (1368 aa).

The protein belongs to the RNA polymerase beta chain family. The RNAP catalytic core consists of 2 alpha, 1 beta, 1 beta' and 1 omega subunit. When a sigma factor is associated with the core the holoenzyme is formed, which can initiate transcription.

It carries out the reaction RNA(n) + a ribonucleoside 5'-triphosphate = RNA(n+1) + diphosphate. DNA-dependent RNA polymerase catalyzes the transcription of DNA into RNA using the four ribonucleoside triphosphates as substrates. The sequence is that of DNA-directed RNA polymerase subunit beta from Syntrophotalea carbinolica (strain DSM 2380 / NBRC 103641 / GraBd1) (Pelobacter carbinolicus).